The following is a 176-amino-acid chain: Non-specific lipid transfer protein GPI-anchored 12 (176 aa).

An N-terminal signal peptide occupies residues Met-1 to Gly-20. Cystine bridges form between Cys-40/Cys-83, Cys-50/Cys-67, Cys-68/Cys-110, and Cys-81/Cys-120. Asn-46 is a glycosylation site (N-linked (GlcNAc...) asparagine). A lipid anchor (GPI-anchor amidated asparagine) is attached at Asn-149. A propeptide spans Gly-150 to Ser-176 (removed in mature form).

It belongs to the plant LTP family. As to expression, preferentially expressed in the endodermis of hypocotyls and roots of seedlings, and in petals and anthers of inflorescences. May also be expressed in siliques, carpels and pedicels.

Its subcellular location is the cell membrane. Functionally, probable lipid transfer protein. In Arabidopsis thaliana (Mouse-ear cress), this protein is Non-specific lipid transfer protein GPI-anchored 12.